We begin with the raw amino-acid sequence, 343 residues long: 3-oxopimeloyl-[acyl-carrier-protein] synthase (343 aa).

Active-site residues include Cys-132 and His-272. The interval 273–277 (QANHR) is ACP-binding. Residue Asn-302 is part of the active site.

This sequence belongs to the thiolase-like superfamily. BioZ family.

It catalyses the reaction malonyl-[ACP] + an acyl-CoA + H(+) = a 3-oxoacyl-[ACP] + CO2 + CoA. The catalysed reaction is glutaryl-CoA + malonyl-[ACP] + H(+) = 3-oxo-6-carboxyhexanoyl-[ACP] + CO2 + CoA. The protein operates within cofactor biosynthesis; biotin biosynthesis. Its function is as follows. Involved in the formation of the biotin precursor pimeloyl-ACP. Catalyzes the condensation of glutaryl-CoA, an intermediate in lysine degradation, with malonyl-ACP to produce 3-oxopimeloyl-ACP. The protein is 3-oxopimeloyl-[acyl-carrier-protein] synthase of Rhodothermus marinus (strain ATCC 43812 / DSM 4252 / R-10) (Rhodothermus obamensis).